The following is a 158-amino-acid chain: Endoribonuclease YbeY (158 aa).

Residues H114, H118, and H124 each contribute to the Zn(2+) site.

This sequence belongs to the endoribonuclease YbeY family. The cofactor is Zn(2+).

It is found in the cytoplasm. Its function is as follows. Single strand-specific metallo-endoribonuclease involved in late-stage 70S ribosome quality control and in maturation of the 3' terminus of the 16S rRNA. The sequence is that of Endoribonuclease YbeY from Pasteurella multocida (strain Pm70).